Here is a 128-residue protein sequence, read N- to C-terminus: L-ectoine synthase (128 aa).

This sequence belongs to the ectoine synthase family.

It catalyses the reaction (2S)-4-acetamido-2-aminobutanoate = L-ectoine + H2O. Its pathway is amine and polyamine biosynthesis; ectoine biosynthesis; L-ectoine from L-aspartate 4-semialdehyde: step 3/3. Its function is as follows. Catalyzes the circularization of gamma-N-acetyl-alpha,gamma-diaminobutyric acid (ADABA) to ectoine (1,4,5,6-tetrahydro-2-methyl-4-pyrimidine carboxylic acid), which is an excellent osmoprotectant. This chain is L-ectoine synthase, found in Aliivibrio fischeri (strain MJ11) (Vibrio fischeri).